The following is a 108-amino-acid chain: Peptidyl-prolyl cis-trans isomerase FKBP1A (108 aa).

A PPIase FKBP-type domain is found at 20–108; that stretch reads GQTCVVHYTG…VFDVELLKLE (89 aa). Residue Lys53 is modified to N6-acetyllysine; alternate. Lys53 carries the N6-succinyllysine; alternate modification.

Belongs to the FKBP-type PPIase family. FKBP1 subfamily. As to quaternary structure, interacts with TGFBR1; prevents TGFBR1 phosphorylation by TGFBR2 and stabilizes it in the inactive conformation. Interacts with ACVR1B and SMAD7. Identified in a complex composed of RYR1, PDE4D, PKA, FKBP1A and protein phosphatase 1 (PP1). Interacts directly with RYR2 and RYR3. Interacts with GLMN; rapamycin and FK506 abolish the interaction with GLMN in a dose dependent manner. Interacts directly with RYR1.

It localises to the cytoplasm. The protein localises to the cytosol. Its subcellular location is the sarcoplasmic reticulum membrane. It carries out the reaction [protein]-peptidylproline (omega=180) = [protein]-peptidylproline (omega=0). With respect to regulation, inhibited by both FK506 and rapamycin. In terms of biological role, keeps in an inactive conformation TGFBR1, the TGF-beta type I serine/threonine kinase receptor, preventing TGF-beta receptor activation in absence of ligand. Recruits SMAD7 to ACVR1B which prevents the association of SMAD2 and SMAD3 with the activin receptor complex, thereby blocking the activin signal. May modulate the RYR1 calcium channel activity. PPIases accelerate the folding of proteins. It catalyzes the cis-trans isomerization of proline imidic peptide bonds in oligopeptides. The sequence is that of Peptidyl-prolyl cis-trans isomerase FKBP1A (FKBP1A) from Homo sapiens (Human).